The chain runs to 362 residues: Peptide chain release factor 1 (362 aa).

Position 236 is an N5-methylglutamine (Q236).

It belongs to the prokaryotic/mitochondrial release factor family. Post-translationally, methylated by PrmC. Methylation increases the termination efficiency of RF1.

Its subcellular location is the cytoplasm. Its function is as follows. Peptide chain release factor 1 directs the termination of translation in response to the peptide chain termination codons UAG and UAA. The polypeptide is Peptide chain release factor 1 (Lactobacillus helveticus (strain DPC 4571)).